The following is a 242-amino-acid chain: MLIIPAIDIYKHKVVRMETGKKEKIVLEFNNPLDLAKYWEEKGAKALHLIDLQSAIDANDESKSIVRDIVRSVSIPVEVGGGYRSREKIEEAISWGVWRVIVSSILGMELDYLLDLFSKYENKIIPSIDWYDGKVGIKGWQDFIEWRDIKRKIDLLKVREVIFTDISRDGTLKGVNLENIKNFLSLHDYDVWIAGGISSIEDVIKIKDLSENTGRIKGIIIGRALLEGKINWEEAKKIIDAS.

The Proton acceptor role is filled by Asp-8. Catalysis depends on Asp-129, which acts as the Proton donor.

The protein belongs to the HisA/HisF family.

It is found in the cytoplasm. It carries out the reaction 1-(5-phospho-beta-D-ribosyl)-5-[(5-phospho-beta-D-ribosylamino)methylideneamino]imidazole-4-carboxamide = 5-[(5-phospho-1-deoxy-D-ribulos-1-ylimino)methylamino]-1-(5-phospho-beta-D-ribosyl)imidazole-4-carboxamide. Its pathway is amino-acid biosynthesis; L-histidine biosynthesis; L-histidine from 5-phospho-alpha-D-ribose 1-diphosphate: step 4/9. In Dictyoglomus thermophilum (strain ATCC 35947 / DSM 3960 / H-6-12), this protein is 1-(5-phosphoribosyl)-5-[(5-phosphoribosylamino)methylideneamino] imidazole-4-carboxamide isomerase.